The sequence spans 557 residues: 2-succinyl-5-enolpyruvyl-6-hydroxy-3-cyclohexene-1-carboxylate synthase (557 aa).

Belongs to the TPP enzyme family. MenD subfamily. As to quaternary structure, homodimer. Mg(2+) is required as a cofactor. Requires Mn(2+) as cofactor. It depends on thiamine diphosphate as a cofactor.

It carries out the reaction isochorismate + 2-oxoglutarate + H(+) = 5-enolpyruvoyl-6-hydroxy-2-succinyl-cyclohex-3-ene-1-carboxylate + CO2. The protein operates within quinol/quinone metabolism; 1,4-dihydroxy-2-naphthoate biosynthesis; 1,4-dihydroxy-2-naphthoate from chorismate: step 2/7. Its pathway is quinol/quinone metabolism; menaquinone biosynthesis. Catalyzes the thiamine diphosphate-dependent decarboxylation of 2-oxoglutarate and the subsequent addition of the resulting succinic semialdehyde-thiamine pyrophosphate anion to isochorismate to yield 2-succinyl-5-enolpyruvyl-6-hydroxy-3-cyclohexene-1-carboxylate (SEPHCHC). The protein is 2-succinyl-5-enolpyruvyl-6-hydroxy-3-cyclohexene-1-carboxylate synthase of Staphylococcus aureus (strain bovine RF122 / ET3-1).